The sequence spans 181 residues: Calmodulin-like protein 6 (181 aa).

4 EF-hand domains span residues 33 to 68 (EQIKEYKGVFEMFDEEGNGEVKTGELEWLMSLLGIN), 69 to 104 (PTKSELASMAKDVDRDNKGFFNCDGFLALMGVYHEK), 107 to 142 (NQESELRAAFRVFDKEGKGYIDWNTLKYVLMNAGEP), and 143 to 178 (LNEVEAEQMMKEADKDGDRTIDYEEFVAMMTGESFK). Ca(2+)-binding residues include D156, D158, D160, T162, and E167.

The protein belongs to the calmodulin family. Calglandulin subfamily. Expressed in prostate, thymus, heart, skeleton muscle, bone marrow and ovary.

Its subcellular location is the cytoplasm. It is found in the nucleus. The polypeptide is Calmodulin-like protein 6 (CALML6) (Homo sapiens (Human)).